A 296-amino-acid chain; its full sequence is Phosphoribosylaminoimidazole-succinocarboxamide synthase (296 aa).

This sequence belongs to the SAICAR synthetase family.

The catalysed reaction is 5-amino-1-(5-phospho-D-ribosyl)imidazole-4-carboxylate + L-aspartate + ATP = (2S)-2-[5-amino-1-(5-phospho-beta-D-ribosyl)imidazole-4-carboxamido]succinate + ADP + phosphate + 2 H(+). The protein operates within purine metabolism; IMP biosynthesis via de novo pathway; 5-amino-1-(5-phospho-D-ribosyl)imidazole-4-carboxamide from 5-amino-1-(5-phospho-D-ribosyl)imidazole-4-carboxylate: step 1/2. The polypeptide is Phosphoribosylaminoimidazole-succinocarboxamide synthase (Geobacter metallireducens (strain ATCC 53774 / DSM 7210 / GS-15)).